Reading from the N-terminus, the 555-residue chain is Ribonuclease J2 (555 aa).

4 residues coordinate Zn(2+): His-74, His-76, His-142, and Asp-164. Residue 364 to 368 (HVSGH) participates in substrate binding.

Belongs to the metallo-beta-lactamase superfamily. RNA-metabolizing metallo-beta-lactamase-like family. Bacterial RNase J subfamily. As to quaternary structure, unclear whether it forms homodimers or belongs to a larger complex. According to probably does not form homodimers, while shows homodimer formation. Both reports show RNase J1 and J2 interaction, probably as a heterotetramer shows it is a component of a possible RNA degradosome complex composed of rny, rnjA, rnjB, pnp, pfkA and eno, while finds no evidence of an RNA degradosome complex. Zn(2+) serves as cofactor.

The protein resides in the cytoplasm. Its function is as follows. Endonucleolytically cleaves the 5'-leader sequence of certain mRNAs. Endonuclease digestion by the RNase J1/J2 complex occurs at a different site and in some cases more efficiently than J1 or J2 alone. The exonuclease activity of the J1/J2 complex is highly processive on substrates longer than 5 nucleotides, on shorter substrates is distributive. Plays a role in mRNA maturation and stability. Appears to have a limited effect on 16S rRNA maturation, despite its similarity to RNase J1. This subunit alone has very poor 5'-3' exonuclease activity. The protein is Ribonuclease J2 of Bacillus subtilis (strain 168).